The sequence spans 641 residues: Fructose-1,6-bisphosphatase class 3 (641 aa).

It belongs to the FBPase class 3 family. Requires Mn(2+) as cofactor.

It catalyses the reaction beta-D-fructose 1,6-bisphosphate + H2O = beta-D-fructose 6-phosphate + phosphate. It participates in carbohydrate biosynthesis; gluconeogenesis. The chain is Fructose-1,6-bisphosphatase class 3 from Latilactobacillus sakei subsp. sakei (strain 23K) (Lactobacillus sakei subsp. sakei).